The chain runs to 461 residues: Argininosuccinate lyase (461 aa).

Belongs to the lyase 1 family. Argininosuccinate lyase subfamily.

Its subcellular location is the cytoplasm. It carries out the reaction 2-(N(omega)-L-arginino)succinate = fumarate + L-arginine. It functions in the pathway amino-acid biosynthesis; L-arginine biosynthesis; L-arginine from L-ornithine and carbamoyl phosphate: step 3/3. The polypeptide is Argininosuccinate lyase (Laribacter hongkongensis (strain HLHK9)).